The following is a 214-amino-acid chain: A-type ATP synthase subunit D (214 aa).

Belongs to the V-ATPase D subunit family. Has multiple subunits with at least A(3), B(3), C, D, E, F, H, I and proteolipid K(x).

Its subcellular location is the cell membrane. In terms of biological role, component of the A-type ATP synthase that produces ATP from ADP in the presence of a proton gradient across the membrane. The polypeptide is A-type ATP synthase subunit D (Thermococcus sibiricus (strain DSM 12597 / MM 739)).